The following is a 798-amino-acid chain: Integrin beta-1 (798 aa).

The signal sequence occupies residues 1–20; it reads MNLQLIFWIGLISSICCVFG. Over 21–728 the chain is Extracellular; that stretch reads QADENRCLKA…ETPECPTGPD (708 aa). In terms of domain architecture, PSI spans 26–76; that stretch reads RCLKANAKSCGECIQAGPNCGWCVNSTFLQEGMPTSARCDDLEALKKKGCH. 28 disulfide bridges follow: cysteine 27/cysteine 45, cysteine 35/cysteine 464, cysteine 38/cysteine 64, cysteine 48/cysteine 75, cysteine 207/cysteine 213, cysteine 261/cysteine 301, cysteine 401/cysteine 415, cysteine 435/cysteine 462, cysteine 466/cysteine 486, cysteine 477/cysteine 489, cysteine 491/cysteine 500, cysteine 502/cysteine 533, cysteine 516/cysteine 531, cysteine 525/cysteine 536, cysteine 538/cysteine 553, cysteine 555/cysteine 576, cysteine 560/cysteine 574, cysteine 568/cysteine 579, cysteine 581/cysteine 590, cysteine 592/cysteine 615, cysteine 599/cysteine 613, cysteine 607/cysteine 618, cysteine 620/cysteine 630, cysteine 633/cysteine 636, cysteine 640/cysteine 691, cysteine 646/cysteine 665, cysteine 649/cysteine 661, and cysteine 699/cysteine 723. N-linked (GlcNAc...) asparagine glycosylation occurs at asparagine 50. The span at 75–91 shows a compositional bias: basic and acidic residues; that stretch reads CHPDDIENPRGSKDVKK. Positions 75 to 107 are disordered; that stretch reads CHPDDIENPRGSKDVKKNKNVTNRSKGTAEKLQ. N-linked (GlcNAc...) asparagine glycans are attached at residues asparagine 94 and asparagine 97. Residues 140-378 form the VWFA domain; that stretch reads DYPIDLYYLM…QLIIDAYNSL (239 aa). Mg(2+) contacts are provided by serine 152 and serine 154. Ca(2+)-binding residues include serine 154, aspartate 157, aspartate 158, and glutamate 189. The tract at residues 207–213 is CX3CL1-binding; it reads CTSEQNC. An N-linked (GlcNAc...) asparagine glycan is attached at asparagine 212. Residues asparagine 244, aspartate 246, proline 248, and glutamate 249 each coordinate Ca(2+). Residue glutamate 249 coordinates Mg(2+). N-linked (GlcNAc...) asparagine glycosylation is present at asparagine 269. The segment at 295–314 is CX3CL1-binding; sequence LPNDGQCHLENDVYTMSHYY. Alanine 362 serves as a coordination point for Ca(2+). Residues asparagine 363, asparagine 406, and asparagine 417 are each glycosylated (N-linked (GlcNAc...) asparagine). Residues 383–465 form an interaction with TMEM182 region; the sequence is ILENSKLPEG…IILQFICECE (83 aa). 4 I-EGF domains span residues 466–501, 502–554, 555–591, and 592–631; these read CQNE…RHCE, CSTD…KFCE, CDNF…SACD, and CSLD…PTCE. A glycan (N-linked (GlcNAc...) asparagine) is linked at asparagine 481. The N-linked (GlcNAc...) asparagine glycan is linked to asparagine 520. The N-linked (GlcNAc...) asparagine glycan is linked to asparagine 584. A glycan (N-linked (GlcNAc...) asparagine) is linked at asparagine 669. A helical membrane pass occupies residues 729-751; it reads IIPIVAGVVAGIVLIGLALLLIW. Topologically, residues 752-798 are cytoplasmic; that stretch reads KLLMIIHDTREFAKFEKEKMNAKWDTGENPIYKSAVTTVVNPKYEGK. Residues 762–767 form a signal for sorting from recycling endosomes; interaction with ACAP1 region; sequence EFAKFE. Residue threonine 777 is modified to Phosphothreonine. A Phosphotyrosine modification is found at tyrosine 783. At serine 785 the chain carries Phosphoserine. The interaction with ITGB1BP1 stretch occupies residues 785–792; that stretch reads SAVTTVVN. Threonine 789 carries the post-translational modification Phosphothreonine. An N6-acetyllysine; alternate modification is found at lysine 794. Lysine 794 is covalently cross-linked (Glycyl lysine isopeptide (Lys-Gly) (interchain with G-Cter in SUMO1); alternate).

It belongs to the integrin beta chain family. In terms of assembly, interacts with seprase FAP (seprase); the interaction occurs at the cell surface of invadopodia membrane in a collagen-dependent manner. Heterodimer of an alpha and a beta subunit. Beta-1 associates with either alpha-1, alpha-2, alpha-3, alpha-4, alpha-5, alpha-6, alpha-7, alpha-8, alpha-9, alpha-10, alpha-11 or alpha-V. ITGA6:ITGB1 is found in a complex with CD9; interaction takes place in oocytes and is involved in sperm-egg fusion. Binds LGALS3BP and NMRK2, when associated with alpha-7, but not with alpha-5. Interacts with FLNA, FLNB, FLNC and RANBP9. Interacts with KRT1 in the presence of RACK1 and SRC. Interacts with JAML; integrin alpha-4/beta-1 may regulate leukocyte to endothelial cells adhesion by controlling JAML homodimerization. Interacts with RAB21. Interacts (via the cytoplasmic region) with RAB25 (via the hypervariable C-terminal region). Interacts with MYO10. Interacts with ITGB1BP1 (via C-terminal region); the interaction is a prerequisite for focal adhesion disassembly. Interacts with TLN1; the interaction is prevented by competitive binding of ITGB1BP1. Interacts with ACAP1; required for ITGB1 recycling. Interacts with ASAP3. Interacts with FERMT2; the interaction is inhibited in presence of ITGB1BP1. Interacts with DAB2. Interacts with FGR and HCK. Interacts with alpha-7A and alpha-7B in adult skeletal muscle. Interacts with alpha-7B in cardiomyocytes of adult heart. Interacts with EMP2; the interaction may be direct or indirect and ITGB1 has a heterodimer form. ITGA5:ITGB1 interacts with CCN3. ITGA4:ITGB1 is found in a ternary complex with CX3CR1 and CX3CL1. ITGA5:ITGB1 interacts with FBN1. ITGA5:ITGB1 acts as a receptor for fibronectin FN1 and mediates R-G-D-dependent cell adhesion to FN1. ITGA5:ITGB1 interacts with IL1B. Interacts with MDK. ITGA4:ITGB1 interacts with MDK; this interaction mediates MDK-induced osteoblast cells migration through PXN phosphorylation. ITGA6:ITGB1 interacts with MDK; this interaction mediates MDK-induced neurite-outgrowth. ITGA5:ITGB1 interacts with ACE2. Interacts with TMEM182 and LAMB1. Interacts with tensin TNS3; TNS3 also interacts with PEAK1, thus acting as an adapter molecule to bridge the association of PEAK1 with ITGB1. Interacts with tensin TNS4; the interaction displaces tensin TNS3 from the ITGB1 cytoplasmic tail and promotes ITGB1 stability. Integrin ITGA9:ITGB1 interacts with SPP1/OPN (via N-terminus). Integrin ITGA9:ITGB1 interacts with TNC/TNFN3 (via the 3rd Fibronectin type-III domain). Integrins ITGA4:ITGB1 and ITGA9:ITGB1 interact with SVEP1 (via Sushi domain 21); thereby inhibit Ca(2+) intracellular signaling and as a result repress vasocontraction. ITGA4:ITGB1 and ITGA5:ITGB1 interacts with SELP. Interacts with CD248. ITGA5:ITGB1 interacts with IGFBP1. ITGA4:ITGB1 interacts with BCAM. Interacts with ADGRG6.

Its subcellular location is the cell membrane. The protein resides in the cell projection. It localises to the invadopodium membrane. It is found in the ruffle membrane. The protein localises to the recycling endosome. Its subcellular location is the melanosome. The protein resides in the lamellipodium. It localises to the ruffle. It is found in the cell junction. The protein localises to the focal adhesion. Functionally, integrins alpha-1/beta-1, alpha-2/beta-1, alpha-10/beta-1 and alpha-11/beta-1 are receptors for collagen. Integrins alpha-1/beta-1 and alpha-2/beta-2 recognize the proline-hydroxylated sequence G-F-P-G-E-R in collagen. Integrins alpha-2/beta-1, alpha-3/beta-1, alpha-4/beta-1, alpha-5/beta-1, alpha-8/beta-1, alpha-10/beta-1, alpha-11/beta-1 and alpha-V/beta-1 are receptors for fibronectin. Alpha-4/beta-1 recognizes one or more domains within the alternatively spliced CS-1 and CS-5 regions of fibronectin. Integrin alpha-5/beta-1 is a receptor for fibrinogen. Integrin alpha-1/beta-1, alpha-2/beta-1, alpha-6/beta-1 and alpha-7/beta-1 are receptors for lamimin. Integrin alpha-6/beta-1 (ITGA6:ITGB1) is present in oocytes and is involved in sperm-egg fusion. Integrin alpha-4/beta-1 is a receptor for VCAM1 and recognizes the sequence Q-I-D-S in VCAM1. Integrin alpha-9/beta-1 is a receptor for VCAM1, cytotactin and osteopontin. It recognizes the sequence A-E-I-D-G-I-E-L in cytotactin. Integrin alpha-3/beta-1 is a receptor for epiligrin, thrombospondin and CSPG4. Integrin alpha-3/beta-1 provides a docking site for FAP (seprase) at invadopodia plasma membranes in a collagen-dependent manner and hence may participate in the adhesion, formation of invadopodia and matrix degradation processes, promoting cell invasion. Alpha-3/beta-1 may mediate with LGALS3 the stimulation by CSPG4 of endothelial cells migration. Integrin alpha-V/beta-1 is a receptor for vitronectin. Beta-1 integrins recognize the sequence R-G-D in a wide array of ligands. When associated with alpha-7/beta-1 integrin, regulates cell adhesion and laminin matrix deposition. Involved in promoting endothelial cell motility and angiogenesis. Involved in osteoblast compaction through the fibronectin fibrillogenesis cell-mediated matrix assembly process and the formation of mineralized bone nodules. May be involved in up-regulation of the activity of kinases such as PKC via binding to KRT1. Together with KRT1 and RACK1, serves as a platform for SRC activation or inactivation. Plays a mechanistic adhesive role during telophase, required for the successful completion of cytokinesis. ITGA4:ITGB1 binds to fractalkine (CX3CL1) and may act as its coreceptor in CX3CR1-dependent fractalkine signaling. ITGA4:ITGB1 and ITGA5:ITGB1 bind to PLA2G2A via a site (site 2) which is distinct from the classical ligand-binding site (site 1) and this induces integrin conformational changes and enhanced ligand binding to site 1. ITGA5:ITGB1 acts as a receptor for fibrillin-1 (FBN1) and mediates R-G-D-dependent cell adhesion to FBN1. ITGA5:ITGB1 is a receptor for IL1B and binding is essential for IL1B signaling. ITGA5:ITGB3 is a receptor for soluble CD40LG and is required for CD40/CD40LG signaling. Plays an important role in myoblast differentiation and fusion during skeletal myogenesis. ITGA9:ITGB1 may play a crucial role in SVEP1/polydom-mediated myoblast cell adhesion. Integrins ITGA9:ITGB1 and ITGA4:ITGB1 repress PRKCA-mediated L-type voltage-gated channel Ca(2+) influx and ROCK-mediated calcium sensitivity in vascular smooth muscle cells via their interaction with SVEP1, thereby inhibit vasocontraction. This Felis catus (Cat) protein is Integrin beta-1 (ITGB1).